The chain runs to 377 residues: MACPCGARVLVEILTGLLSLKNQSPSTPPESEGEFTRNYILGPKYIIKAIEIFSTMPNTIPPFEYAPVKTTWLKRDVLLFAHSIGCKAGDELHFLYELHPKFQVFPTYPIVLTFKHADIDIVDFLARNAARTLPPGCPVLDWSVAVDGRRRMEFLCPLPPSSEGKTWDIHTKVLGVFDKGAGKGTVMEMEHVLKQRESGQVYTRAWESVFFKGTGGWGGERGPKMNEHVPSTPPRRPDAVSSFQSNAESAHLYRLNGDYNPLHATPEPGKSLGYGGTIMHGLFSWNITARAVLSQFGGSEGRRLRDFEAMFSSPVKPGDKLDILMWDMGLCKRATSAVRNDESLQEVRFMVKVGDRVVLSNGKALLKCEDEGVEVKL.

NADP(+) is bound by residues Lys101 and Arg196. The segment at Glu220 to Phe243 is disordered. Residues Pro233–Lys332 enclose the MaoC-like domain. NADP(+) contacts are provided by Thr265 and Ile287.

The protein belongs to the short-chain dehydrogenases/reductases (SDR) family.

It functions in the pathway siderophore biosynthesis. Functionally, probable dehydratase; part of the gene cluster that mediates the biosynthesis of hydroxamate-containing siderophores that play a critical role in virulence via intracellular iron acquisition during macrophage infection. The sequence is that of Probable dehydratase NIT22 from Ajellomyces capsulatus (Darling's disease fungus).